The chain runs to 253 residues: Triosephosphate isomerase (253 aa).

A substrate-binding site is contributed by 8–10 (NWK). The Electrophile role is filled by histidine 93. The Proton acceptor role is filled by glutamate 165. Substrate-binding positions include glycine 171, serine 210, and 231–232 (GG).

It belongs to the triosephosphate isomerase family. As to quaternary structure, homodimer.

The protein resides in the cytoplasm. It catalyses the reaction D-glyceraldehyde 3-phosphate = dihydroxyacetone phosphate. The protein operates within carbohydrate biosynthesis; gluconeogenesis. Its pathway is carbohydrate degradation; glycolysis; D-glyceraldehyde 3-phosphate from glycerone phosphate: step 1/1. In terms of biological role, involved in the gluconeogenesis. Catalyzes stereospecifically the conversion of dihydroxyacetone phosphate (DHAP) to D-glyceraldehyde-3-phosphate (G3P). This chain is Triosephosphate isomerase, found in Francisella tularensis subsp. mediasiatica (strain FSC147).